We begin with the raw amino-acid sequence, 254 residues long: Fasciclin-like arabinogalactan protein 7 (254 aa).

Residues 1–22 form the signal peptide; it reads MAKMQLSIFIAVVALIVCSASA. The FAS1 domain maps to 44-186; the sequence is NVNLTELLSV…VAVYQVNRVL (143 aa). Residues N46, N78, N104, and N130 are each glycosylated (N-linked (GlcNAc...) asparagine). The segment at 203-233 is disordered; sequence APAPIVSAPSDSPSVADSEGASSPKSSHKNS. Over residues 206–220 the composition is skewed to low complexity; that stretch reads PIVSAPSDSPSVADS. Residues 222–233 are compositionally biased toward polar residues; that stretch reads GASSPKSSHKNS. A lipid anchor (GPI-anchor amidated asparagine) is attached at N232. Positions 233-254 are cleaved as a propeptide — removed in mature form; sequence SGQKLLLAPISMVISGLVALFL.

This sequence belongs to the fasciclin-like AGP family.

Its subcellular location is the cell membrane. Functionally, may be a cell surface adhesion protein. The sequence is that of Fasciclin-like arabinogalactan protein 7 (FLA7) from Arabidopsis thaliana (Mouse-ear cress).